The chain runs to 442 residues: C4-dicarboxylate transport protein (442 aa).

The next 8 membrane-spanning stretches (helical) occupy residues 10–30 (VQVL…PSFG), 40–60 (FIKL…VSGI), 77–97 (LIYF…VANI), 149–169 (LLQV…LGTL), 185–205 (FVIL…AMAF), 221–241 (LMVA…GLIA), 288–308 (VVGL…SIYL), and 354–374 (AATL…ILGI). A disordered region spans residues 420–442 (PATPEVAAEERGEGRGLDGPLPA).

This sequence belongs to the dicarboxylate/amino acid:cation symporter (DAACS) (TC 2.A.23) family.

Its subcellular location is the cell membrane. Responsible for the transport of dicarboxylates such as succinate, fumarate, and malate across the membrane. The sequence is that of C4-dicarboxylate transport protein from Deinococcus geothermalis (strain DSM 11300 / CIP 105573 / AG-3a).